Here is a 298-residue protein sequence, read N- to C-terminus: uncharacterized protein (298 aa).

It to M.tuberculosis Rv1486c, M.bovis Mb1522c and M.avium MAV321.

This is an uncharacterized protein from Mycobacterium leprae (strain TN).